An 881-amino-acid polypeptide reads, in one-letter code: DNA replication helicase (881 aa).

Residue 90–97 (GNAGSGKS) coordinates ATP.

The protein belongs to the herpesviridae helicase family. Associates with the primase and the primase-associated factor to form the helicase-primase complex.

The protein localises to the host nucleus. Component of the helicase/primase complex. Unwinds the DNA at the replication forks and generates single-stranded DNA for both leading and lagging strand synthesis. The primase synthesizes short RNA primers on the lagging strand that the polymerase elongates using dNTPs. Possesses helicase-like motifs and therefore may act as the helicase subunit of the complex. This chain is DNA replication helicase, found in Homo sapiens (Human).